The following is a 538-amino-acid chain: Zinc finger protein with KRAB and SCAN domains 3 (538 aa).

S42 is subject to Phosphoserine. Residues 46–128 enclose the SCAN box domain; the sequence is RERFRGFRYP…VLLEYLERQL (83 aa). Residue K171 forms a Glycyl lysine isopeptide (Lys-Gly) (interchain with G-Cter in SUMO2) linkage. T207 is subject to Phosphothreonine. The KRAB domain occupies 214–274; sequence LKVEDVALTL…PAEELPEKEH (61 aa). The segment covering 226–236 has biased composition (polar residues); sequence EWTQQDSSQGN. Residues 226–274 are disordered; sequence EWTQQDSSQGNLCRDEKQENHGSLVSLGDEKQTKSRDLPPAEELPEKEH. Over residues 253–274 the composition is skewed to basic and acidic residues; the sequence is GDEKQTKSRDLPPAEELPEKEH. 5 C2H2-type zinc fingers span residues 314–336, 342–364, 370–392, 398–420, and 426–448; these read HICH…RRIH, YECE…QRVH, YECE…QRTH, YECD…HRIH, and YQCS…QRIH. T449 is modified (phosphothreonine). C2H2-type zinc fingers lie at residues 480 to 502 and 508 to 530; these read YKCN…QKIH and YQCN…QRSH.

Belongs to the krueppel C2H2-type zinc-finger protein family.

The protein resides in the nucleus. The protein localises to the cytoplasm. Functionally, transcriptional factor that binds to the consensus sequence 5'-[GT][AG][AGT]GGGG-3' and acts as a repressor of autophagy. Specifically represses expression of genes involved in autophagy and lysosome biogenesis/function such as MAP1LC3B, ULK1 or WIPI2. Associates with chromatin at the ITGB4 and VEGF promoters. Also acts as a transcription activator and promotes cancer cell progression and/or migration in various tumors and myelomas. In Homo sapiens (Human), this protein is Zinc finger protein with KRAB and SCAN domains 3 (ZKSCAN3).